We begin with the raw amino-acid sequence, 304 residues long: RNA polymerase II holoenzyme cyclin-like subunit (304 aa).

One can recognise a Cyclin N-terminal domain in the interval 43–174 (TIHDSKANKQ…LIEELQSYLI (132 aa)).

It belongs to the cyclin family. Cyclin C subfamily. In terms of assembly, component of the SRB8-11 complex, a regulatory module of the Mediator complex.

It is found in the nucleus. Component of the SRB8-11 complex. The SRB8-11 complex is a regulatory module of the Mediator complex which is itself involved in regulation of basal and activated RNA polymerase II-dependent transcription. The SRB8-11 complex may be involved in the transcriptional repression of a subset of genes regulated by Mediator. It may inhibit the association of the Mediator complex with RNA polymerase II to form the holoenzyme complex. The SRB8-11 complex phosphorylates the C-terminal domain (CTD) of the largest subunit of RNA polymerase II. The polypeptide is RNA polymerase II holoenzyme cyclin-like subunit (SSN8) (Kluyveromyces lactis (strain ATCC 8585 / CBS 2359 / DSM 70799 / NBRC 1267 / NRRL Y-1140 / WM37) (Yeast)).